Consider the following 2273-residue polypeptide: Nonribosomal peptide synthetase hasD (2273 aa).

The interval 100-446 is adenylation 1; the sequence is FHDQLQKHSS…AGLGLALGYF (347 aa). Residues 588–664 form the Carrier 1 domain; it reads ERGLGAVESV…NIAAAVVELS (77 aa). At S625 the chain carries O-(pantetheine 4'-phosphoryl)serine. Positions 696-1120 are condensation 1; the sequence is IAPMTDMQTR…AAQPDTDLSN (425 aa). The interval 1156–1487 is adenylation 2; it reads ENSIQAHPDI…SGVQVTPGYL (332 aa). The region spanning 1634–1714 is the Carrier 2 domain; the sequence is DLETDTQRVL…DLSLAIDELV (81 aa). At S1673 the chain carries O-(pantetheine 4'-phosphoryl)serine. The tract at residues 1735-2127 is condensation 2; the sequence is GQLPLSYLEK…QDLEVDMEYD (393 aa). Residues 2174-2200 are disordered; it reads PVGLTPSHEGSAELTNGTNKTDSTTGQ. The segment covering 2186–2200 has biased composition (polar residues); the sequence is ELTNGTNKTDSTTGQ. The region spanning 2201 to 2273 is the Carrier 3 domain; it reads QELENNLTDV…LELATCAVII (73 aa). S2235 bears the O-(pantetheine 4'-phosphoryl)serine mark.

The protein belongs to the NRP synthetase family. Pantetheine 4'-phosphate serves as cofactor.

Its pathway is secondary metabolite biosynthesis. In terms of biological role, nonribosomal peptide synthetase; part of the gene cluster that mediates the biosynthesis of hexadehydro-astechrome (HAS), a tryptophan-derived iron(III)-complex that acts as a virulence factor in infected mice. Within the pathway, the NRPS condenses tryptophan and alanine to produce the Trp-Ala dipeptide. The 7-dimethylallyltryptophan synthase hasE then catalyzes the prenylation of the hasD-tethered tryptophan or the resulting tethered Trp-Ala dipeptide at the C-7 position of the indole moiety. HAS biosynthesis continues via tethered intermediates with the succesive actions of the cytochrome P450 monooxygenase hasH, the O-methyltransferase hasC, and the FAD-linked oxidoreductase hasG. The resulting O-methylated diketopiperazine is then released from hasD. Finally, three O-methylated diketopiperazine molecules assemble in a trimeric complex with Fe(III) to produce hexadehydro-astechrome. This Aspergillus fumigatus (strain CBS 144.89 / FGSC A1163 / CEA10) (Neosartorya fumigata) protein is Nonribosomal peptide synthetase hasD.